The sequence spans 73 residues: UPF0154 protein MYCGA5700 (73 aa).

A helical transmembrane segment spans residues 5–25; that stretch reads LALGLSIPLCLIVGAFVGYFV.

The protein belongs to the UPF0154 family.

It is found in the membrane. The chain is UPF0154 protein MYCGA5700 from Mycoplasmoides gallisepticum (strain R(low / passage 15 / clone 2)) (Mycoplasma gallisepticum).